A 272-amino-acid polypeptide reads, in one-letter code: Shikimate dehydrogenase (NADP(+)) (272 aa).

Shikimate-binding positions include 14-16 and T61; that span reads SKS. K65 acts as the Proton acceptor in catalysis. Position 77 (E77) interacts with NADP(+). 2 residues coordinate shikimate: N86 and D102. NADP(+)-binding positions include 126-130, 149-154, and M213; these read GAGGA and NRTASR. Y215 is a binding site for shikimate. Position 237 (G237) interacts with NADP(+).

The protein belongs to the shikimate dehydrogenase family. As to quaternary structure, homodimer.

The enzyme catalyses shikimate + NADP(+) = 3-dehydroshikimate + NADPH + H(+). Its pathway is metabolic intermediate biosynthesis; chorismate biosynthesis; chorismate from D-erythrose 4-phosphate and phosphoenolpyruvate: step 4/7. Involved in the biosynthesis of the chorismate, which leads to the biosynthesis of aromatic amino acids. Catalyzes the reversible NADPH linked reduction of 3-dehydroshikimate (DHSA) to yield shikimate (SA). This chain is Shikimate dehydrogenase (NADP(+)), found in Salmonella enteritidis PT4 (strain P125109).